A 512-amino-acid polypeptide reads, in one-letter code: Glutathione-binding protein GsiB (512 aa).

The first 26 residues, 1–26, serve as a signal peptide directing secretion; that stretch reads MTQFITHKWLAALGLASSIAAFPALA.

This sequence belongs to the bacterial solute-binding protein 5 family. The complex is composed of two ATP-binding proteins (GsiA), two transmembrane proteins (GsiC and GsiD) and a solute-binding protein (GsiB).

The protein resides in the periplasm. Part of the ABC transporter complex GsiABCD involved in glutathione import. Binds glutathione. The protein is Glutathione-binding protein GsiB of Salmonella choleraesuis (strain SC-B67).